The primary structure comprises 140 residues: Large ribosomal subunit protein uL24 (140 aa).

This sequence belongs to the universal ribosomal protein uL24 family. Part of the 50S ribosomal subunit.

Its function is as follows. One of two assembly initiator proteins, it binds directly to the 5'-end of the 23S rRNA, where it nucleates assembly of the 50S subunit. Functionally, located at the polypeptide exit tunnel on the outside of the subunit. In Nanoarchaeum equitans (strain Kin4-M), this protein is Large ribosomal subunit protein uL24.